The chain runs to 216 residues: uncharacterized protein (216 aa).

This is an uncharacterized protein from Methylophilus leisingeri (strain DSM 6813 / VKM B-2013 / DM11).